The sequence spans 267 residues: GTP cyclohydrolase MptA (267 aa).

This sequence belongs to the GTP cyclohydrolase IV family. Homodimer. Requires Fe(2+) as cofactor.

It catalyses the reaction GTP + H2O = 7,8-dihydroneopterin 2',3'-cyclic phosphate + formate + diphosphate + H(+). The protein operates within cofactor biosynthesis; 5,6,7,8-tetrahydromethanopterin biosynthesis. Its function is as follows. Converts GTP to 7,8-dihydro-D-neopterin 2',3'-cyclic phosphate, the first intermediate in the biosynthesis of coenzyme methanopterin. The protein is GTP cyclohydrolase MptA of Thermococcus kodakarensis (strain ATCC BAA-918 / JCM 12380 / KOD1) (Pyrococcus kodakaraensis (strain KOD1)).